Here is a 453-residue protein sequence, read N- to C-terminus: Chromosomal replication initiator protein DnaA (453 aa).

A domain I, interacts with DnaA modulators region spans residues 1 to 74 (MKEKQFWNRI…GFEIYDAEIT (74 aa)). The domain II stretch occupies residues 74–113 (TPHYIFTKPQDTTSSQVEEATNLTLYDYSPKLVSIPYSDT). The segment at 114–331 (GLKEKYTFDN…GAINDITLIA (218 aa)) is domain III, AAA+ region. ATP-binding residues include G158, G160, K161, and T162. The interval 332-453 (RVKKIKDITI…EIESIKKKIK (122 aa)) is domain IV, binds dsDNA.

The protein belongs to the DnaA family. In terms of assembly, oligomerizes as a right-handed, spiral filament on DNA at oriC.

It is found in the cytoplasm. Functionally, plays an essential role in the initiation and regulation of chromosomal replication. ATP-DnaA binds to the origin of replication (oriC) to initiate formation of the DNA replication initiation complex once per cell cycle. Binds the DnaA box (a 9 base pair repeat at the origin) and separates the double-stranded (ds)DNA. Forms a right-handed helical filament on oriC DNA; dsDNA binds to the exterior of the filament while single-stranded (ss)DNA is stabiized in the filament's interior. The ATP-DnaA-oriC complex binds and stabilizes one strand of the AT-rich DNA unwinding element (DUE), permitting loading of DNA polymerase. After initiation quickly degrades to an ADP-DnaA complex that is not apt for DNA replication. Binds acidic phospholipids. This chain is Chromosomal replication initiator protein DnaA, found in Streptococcus pneumoniae (strain Taiwan19F-14).